We begin with the raw amino-acid sequence, 1111 residues long: Protein STU1 (1111 aa).

HEAT repeat units follow at residues 95–133 (ALPL…ERSV) and 167–205 (YVPT…KSDL). 2 disordered regions span residues 225–245 (ELNP…VEPS) and 476–751 (RLLQ…VDEE). The segment covering 502–511 (SKSTMGTSKP) has biased composition (polar residues). The span at 704-714 (PREEQRFVKPV) shows a compositional bias: basic and acidic residues.

Belongs to the CLASP family. Interacts with microtubules.

The protein localises to the cytoplasm. Its subcellular location is the cytoskeleton. It is found in the nucleus. The protein resides in the spindle. Functionally, microtubule binding protein that promotes the stabilization of dynamic microtubules. Required for mitotic spindle formation. This chain is Protein STU1 (STU1), found in Chaetomium globosum (strain ATCC 6205 / CBS 148.51 / DSM 1962 / NBRC 6347 / NRRL 1970) (Soil fungus).